A 725-amino-acid polypeptide reads, in one-letter code: Envelope glycoprotein H (725 aa).

The N-terminal stretch at 1-19 is a signal peptide; it reads MKLSLILSIALCSTRVVYA. Residues 20-700 lie on the Virion surface side of the membrane; that stretch reads AGAEAPRISR…LVNVRPSMPY (681 aa). 2 N-linked (GlcNAc...) asparagine; by host glycosylation sites follow: asparagine 38 and asparagine 50. An interaction with gL region spans residues 184 to 247; that stretch reads TGYTVTVSLA…QTPDHDLLVV (64 aa). 4 N-linked (GlcNAc...) asparagine; by host glycosylation sites follow: asparagine 319, asparagine 459, asparagine 621, and asparagine 681. A helical membrane pass occupies residues 701–721; sequence SVVVALVIIAILMALGLYRLC. Residues 722–725 lie on the Intravirion side of the membrane; sequence RQKR.

The protein belongs to the herpesviridae glycoprotein H family. In terms of assembly, interacts with glycoprotein L (gL); this interaction is necessary for the correct processing and cell surface expression of gH. The heterodimer gH/gL seems to interact with gB trimers during fusion. In terms of processing, N-glycosylated, O-glycosylated, and sialylated.

The protein localises to the virion membrane. The protein resides in the host cell membrane. It localises to the host endosome membrane. Its function is as follows. The heterodimer glycoprotein H-glycoprotein L is required for the fusion of viral and plasma membranes leading to virus entry into the host cell. Following initial binding to host receptor, membrane fusion is mediated by the fusion machinery composed of gB and the heterodimer gH/gL. May also be involved in the fusion between the virion envelope and the outer nuclear membrane during virion morphogenesis. The polypeptide is Envelope glycoprotein H (Murid herpesvirus 1 (strain Smith) (MuHV-1)).